We begin with the raw amino-acid sequence, 267 residues long: MHPMLNIAVRAARKAGNLIAKNYETPDAVEASQKGSNDFVTNVDKAAEAVIIDTIRKSYPQHTIITEESGELEGTDQDVQWVIDPLDGTTNFIKRLPHFAVSIAVRIKGRTEVAVVYDPMRNELFTATRGQGAQLNGYRLRGSTARDLDGTILATGFPFKAKQYATTYINIVGKLFNECADFRRTGSAALDLAYVAAGRVDGFFEIGLRPWDFAAGELLVREAGGIVSDFTGGHNYMLTGNIVAGNPRVVKAMLANMRDELSDALKR.

The Mg(2+) site is built by Glu-67, Asp-84, and Leu-86. Residue Glu-67 coordinates substrate. Substrate is bound by residues 86–89, Arg-183, and Asp-212; that span reads LDGT.

Belongs to the inositol monophosphatase superfamily. Homodimer. The rRNA transcription and antitermination complex (rrnTAC) consists of RNA polymerase (RNAP), NusA, NusB, NusE (rpsJ), NusG, SubB, ribosomal protein S4, DNA and precursor rRNA; S4 is more flexible than other subunits. Mg(2+) is required as a cofactor.

The protein resides in the cytoplasm. It carries out the reaction a myo-inositol phosphate + H2O = myo-inositol + phosphate. Functionally, part of the processive rRNA transcription and antitermination complex (rrnTAC). The complex forms an RNA-chaperone ring around the RNA exit tunnel of RNA polymerase (RNAP). It supports rapid transcription and antitermination of rRNA operons, cotranscriptional rRNA folding, and annealing of distal rRNA regions to allow correct ribosome biogenesis. This subunit may play a central role in organizing the structure. IMPase activity is not required for its Nus factor function. The protein is Nus factor SuhB (suhB) of Escherichia coli O157:H7.